We begin with the raw amino-acid sequence, 400 residues long: Phosphoglycerate kinase (400 aa).

Substrate contacts are provided by residues 22–24, arginine 38, 61–64, arginine 119, and arginine 152; these read DFN and HLGR. ATP-binding positions include lysine 205, glycine 296, glutamate 327, and 353–356; that span reads GGDT.

It belongs to the phosphoglycerate kinase family. As to quaternary structure, monomer.

It localises to the cytoplasm. The catalysed reaction is (2R)-3-phosphoglycerate + ATP = (2R)-3-phospho-glyceroyl phosphate + ADP. Its pathway is carbohydrate degradation; glycolysis; pyruvate from D-glyceraldehyde 3-phosphate: step 2/5. This chain is Phosphoglycerate kinase, found in Campylobacter lari (strain RM2100 / D67 / ATCC BAA-1060).